The chain runs to 421 residues: Probable cysteine desulfurase (421 aa).

Residue lysine 242 is modified to N6-(pyridoxal phosphate)lysine.

This sequence belongs to the class-V pyridoxal-phosphate-dependent aminotransferase family. Csd subfamily. It depends on pyridoxal 5'-phosphate as a cofactor.

It catalyses the reaction (sulfur carrier)-H + L-cysteine = (sulfur carrier)-SH + L-alanine. Its function is as follows. Catalyzes the removal of elemental sulfur and selenium atoms from L-cysteine, L-cystine, L-selenocysteine, and L-selenocystine to produce L-alanine. The sequence is that of Probable cysteine desulfurase (csd) from Pasteurella multocida (strain Pm70).